The following is a 263-amino-acid chain: MSKIHPSAVVEDGAIIGDEVIIEAYSFVGANAKIGNNVVIKQGARILPNVKIGDDSKIFSYAIVGDIPQDISYKDEINSGVIIGKNATIREFVTINSGTAKGDGYTRIGDNAFIMAYSHIAHDCILGNNIILANNATLAGHVELGDYTVVGGLTPIHQFVKVGEGCMIAGASALSQDIVPFCLAEGNRASIRSLNLVGLRRRFDKEEIDILSKTFKILFKQGNLKDNALNLLESTSSENVKKMCNFILETKRGIPIYKEKNHG.

This sequence belongs to the transferase hexapeptide repeat family. LpxA subfamily. As to quaternary structure, homotrimer.

The protein localises to the cytoplasm. It carries out the reaction a (3R)-hydroxyacyl-[ACP] + UDP-N-acetyl-alpha-D-glucosamine = a UDP-3-O-[(3R)-3-hydroxyacyl]-N-acetyl-alpha-D-glucosamine + holo-[ACP]. It participates in glycolipid biosynthesis; lipid IV(A) biosynthesis; lipid IV(A) from (3R)-3-hydroxytetradecanoyl-[acyl-carrier-protein] and UDP-N-acetyl-alpha-D-glucosamine: step 1/6. In terms of biological role, involved in the biosynthesis of lipid A, a phosphorylated glycolipid that anchors the lipopolysaccharide to the outer membrane of the cell. The sequence is that of Acyl-[acyl-carrier-protein]--UDP-N-acetylglucosamine O-acyltransferase from Campylobacter lari (strain RM2100 / D67 / ATCC BAA-1060).